The following is a 64-amino-acid chain: Large ribosomal subunit protein uL30 (64 aa).

This sequence belongs to the universal ribosomal protein uL30 family. Part of the 50S ribosomal subunit.

The chain is Large ribosomal subunit protein uL30 from Bdellovibrio bacteriovorus (strain ATCC 15356 / DSM 50701 / NCIMB 9529 / HD100).